The primary structure comprises 208 residues: High frequency lysogenization protein HflD homolog (208 aa).

Positions 91-125 form a coiled coil; that stretch reads LMVLERKLNANKQAMNQLGERLGQLERQLAHFDLE.

It belongs to the HflD family.

The protein resides in the cytoplasm. It localises to the cell inner membrane. This chain is High frequency lysogenization protein HflD homolog, found in Serratia proteamaculans (strain 568).